The chain runs to 437 residues: Adenylosuccinate synthetase (437 aa).

GTP-binding positions include 25–31 (GDEGKGK), 53–55 (GHT), and K62. The active-site Proton acceptor is the D26. Mg(2+)-binding residues include D26 and G53. IMP is bound by residues 26-29 (DEGK) and 51-54 (NAGH). Catalysis depends on H54, which acts as the Proton donor. Positions 141, 155, 232, and 247 each coordinate IMP. T307 serves as a coordination point for GTP. 307–313 (TTTKRPR) serves as a coordination point for substrate. R311 is a binding site for IMP. Residues R313, 339-341 (KLD), and 425-427 (GIG) contribute to the GTP site.

The protein belongs to the adenylosuccinate synthetase family. Homodimer. It depends on Mg(2+) as a cofactor.

The protein resides in the cytoplasm. The enzyme catalyses IMP + L-aspartate + GTP = N(6)-(1,2-dicarboxyethyl)-AMP + GDP + phosphate + 2 H(+). Its pathway is purine metabolism; AMP biosynthesis via de novo pathway; AMP from IMP: step 1/2. Plays an important role in the salvage pathway for purine nucleotide biosynthesis. Catalyzes the first committed step in the biosynthesis of AMP from IMP. The polypeptide is Adenylosuccinate synthetase (Plasmodium vivax (strain Salvador I)).